We begin with the raw amino-acid sequence, 303 residues long: Coenzyme PQQ synthesis protein B (303 aa).

This sequence belongs to the PqqB family.

It participates in cofactor biosynthesis; pyrroloquinoline quinone biosynthesis. In terms of biological role, may be involved in the transport of PQQ or its precursor to the periplasm. The protein is Coenzyme PQQ synthesis protein B of Pseudomonas fluorescens (strain Pf0-1).